The primary structure comprises 266 residues: Integral membrane protein 2B (266 aa).

Residues 1–54 are Cytoplasmic-facing; that stretch reads MVKVTFNSALAQKEAKKDEPKSSEEALIAPPDAVAVDCKDPDDVVPVGQRRAWC. A helical; Signal-anchor for type II membrane protein membrane pass occupies residues 55-75; it reads WCMCFGLAFMLAGVILGGAYL. Over 76-266 the chain is Lumenal; sequence YKYFALQPDD…KFAVETLICS (191 aa). Positions 102–134 are necessary for interaction with APP and inhibitor effects on APP processing; that stretch reads EPSADAPAARYQTIEENIKIFEEDAVEFISVPV. Residues 137–231 form the BRICHOS domain; it reads FADSDPANIV…LCHDKETYKL (95 aa). Intrachain disulfides connect cysteine 164-cysteine 223 and cysteine 248-cysteine 265. Residue asparagine 170 is glycosylated (N-linked (GlcNAc...) asparagine).

The protein belongs to the ITM2 family. As to quaternary structure, homodimer; disulfide-linked. Interacts with SPPL2A and SPPL2B. Interacts with APP. Mature BRI2 (mBRI2) interacts with the APP amyloid-beta A4 protein; the interaction occurs at the cell surface and in the endocytic compartments and enable alpha- and beta-secretase-induced APP cleavage inhibition. Mature BRI2 (mBRI2) interacts with the APP C99; the interaction occurs in the endocytic compartments and enable gamma-secretase-induced C99 cleavage inhibition. May form heterodimers with Bri23 peptide and APP amyloid-beta protein 40. Interacts with ADAM7 in sperm; the interaction increases following capacitation. The ectodomain C-terminal part of the imBRI2 is processed by furin producing a secreted Bri23 peptide and a mature BRI2, membrane form (mBRI2). The remaining part of the ectodomain of mBRI2 containing the BRICHOS domain is cleaved by ADAM10 and is secreted (BRI2C, soluble form). The membrane-bound N-terminal fragment (BRI2C, membrane form) is further proteolytically processed by SPPL2A and SPPL2B through regulated intramembrane proteolysis producing a secreted C-peptide and a BRI2 intracellular domain (BRI2 ICD) released in the cytosol. Shedding by ADAM10 facilitates intramembrane cleavage but is not absolutely required for BRI2 ICD generation. In terms of processing, glycosylation at Asn-170 is important for cell surface localization, but doesn't affect furin- and ADAM10-induced proteolytic processing.

The protein localises to the golgi apparatus membrane. The protein resides in the cell membrane. It localises to the endosome membrane. Its subcellular location is the secreted. Its function is as follows. Plays a regulatory role in the processing of the amyloid-beta A4 precursor protein (APP) and acts as an inhibitor of the amyloid-beta peptide aggregation and fibrils deposition. Plays a role in the induction of neurite outgrowth. Functions as a protease inhibitor by blocking access of secretases to APP cleavage sites. Functionally, mature BRI2 (mBRI2) functions as a modulator of the amyloid-beta A4 precursor protein (APP) processing leading to a strong reduction in the secretion of secretase-processed amyloid-beta protein 40 and amyloid-beta protein 42. In terms of biological role, bri23 peptide prevents aggregation of APP amyloid-beta protein 42 into toxic oligomers. This chain is Integral membrane protein 2B (Itm2b), found in Rattus norvegicus (Rat).